The sequence spans 240 residues: 2,3,4,5-tetrahydropyridine-2,6-dicarboxylate N-acetyltransferase (240 aa).

Belongs to the transferase hexapeptide repeat family. DapH subfamily.

The catalysed reaction is (S)-2,3,4,5-tetrahydrodipicolinate + acetyl-CoA + H2O = L-2-acetamido-6-oxoheptanedioate + CoA. It participates in amino-acid biosynthesis; L-lysine biosynthesis via DAP pathway; LL-2,6-diaminopimelate from (S)-tetrahydrodipicolinate (acetylase route): step 1/3. Functionally, catalyzes the transfer of an acetyl group from acetyl-CoA to tetrahydrodipicolinate. In Halalkalibacterium halodurans (strain ATCC BAA-125 / DSM 18197 / FERM 7344 / JCM 9153 / C-125) (Bacillus halodurans), this protein is 2,3,4,5-tetrahydropyridine-2,6-dicarboxylate N-acetyltransferase.